A 302-amino-acid chain; its full sequence is tRNA pseudouridine synthase B (302 aa).

D45 serves as the catalytic Nucleophile.

It belongs to the pseudouridine synthase TruB family. Type 1 subfamily.

The catalysed reaction is uridine(55) in tRNA = pseudouridine(55) in tRNA. In terms of biological role, responsible for synthesis of pseudouridine from uracil-55 in the psi GC loop of transfer RNAs. The protein is tRNA pseudouridine synthase B of Francisella tularensis subsp. novicida (strain U112).